The following is a 77-amino-acid chain: Protein OPG146 (77 aa).

This sequence belongs to the orthopoxvirus OPG146 family. In terms of assembly, interacts with capping enzyme RAP94/OPG109, the two large RNA polymerase subunits RPO147/OPG105 and RPO132/OPG151, the two early transcription factor subunits OPG185 and OPG133, one of the capping enzyme subunits OPG113, the nucleoside triphosphate phosphohydrolase OPG123, two core proteins OPG129 and OPG138, and a virion protein OPG064.

The protein localises to the virion. Its subcellular location is the host cytoplasm. The protein resides in the host nucleus. Plays a role in the maturation of immature virions to infectious particles. May also participate in viral transcription. The polypeptide is Protein OPG146 (OPG146) (Homo sapiens (Human)).